A 118-amino-acid chain; its full sequence is Ribonuclease P protein component (118 aa).

This sequence belongs to the RnpA family. In terms of assembly, consists of a catalytic RNA component (M1 or rnpB) and a protein subunit.

It catalyses the reaction Endonucleolytic cleavage of RNA, removing 5'-extranucleotides from tRNA precursor.. Its function is as follows. RNaseP catalyzes the removal of the 5'-leader sequence from pre-tRNA to produce the mature 5'-terminus. It can also cleave other RNA substrates such as 4.5S RNA. The protein component plays an auxiliary but essential role in vivo by binding to the 5'-leader sequence and broadening the substrate specificity of the ribozyme. The polypeptide is Ribonuclease P protein component (Enterococcus faecalis (strain ATCC 700802 / V583)).